The primary structure comprises 476 residues: CDK5 and ABL1 enzyme substrate 2 (476 aa).

Positions 1–119 (MAAAAAGGAP…GLGLDGQRQR (119 aa)) are disordered. Residues 30–40 (PRRRGDSRRRQ) show a composition bias toward basic residues. Residues 65 to 96 (PAPPPPPPTEAREAPAPPPAPPGGLPGLPARP) show a composition bias toward pro residues. Ser128 and Ser206 each carry phosphoserine. The segment at 256–295 (DSHGLLPQPRPSIPRAPPGSRHKPVPTKSTPAGTELGSDG) is disordered. Over residues 263–272 (QPRPSIPRAP) the composition is skewed to pro residues.

The protein belongs to the cyclin family. Binds to CDK3, CDK5 and ABL1. The C-terminal cyclin-box-like region binds to CDK5. As to expression, widely expressed.

Unknown. Probably involved in G1-S cell cycle transition. This chain is CDK5 and ABL1 enzyme substrate 2 (Cables2), found in Mus musculus (Mouse).